Here is a 688-residue protein sequence, read N- to C-terminus: Potassium-transporting ATPase ATP-binding subunit (688 aa).

The next 4 helical transmembrane spans lie at 37–57, 65–85, 219–239, and 262–282; these read FLVY…LVGI, ILGI…AEAI, IALQ…TVSL, and VALL…SIGI. The active-site 4-aspartylphosphate intermediate is aspartate 313. ATP-binding positions include aspartate 350, glutamate 354, 383–390, and lysine 401; that span reads FTAKTRMS. The Mg(2+) site is built by aspartate 524 and aspartate 528. 3 helical membrane-spanning segments follow: residues 594–614, 622–642, and 668–688; these read FAII…LNIM, AIFS…PLAL, and IIVP…IGIV.

The protein belongs to the cation transport ATPase (P-type) (TC 3.A.3) family. Type IA subfamily. As to quaternary structure, the system is composed of three essential subunits: KdpA, KdpB and KdpC.

It is found in the cell membrane. The catalysed reaction is K(+)(out) + ATP + H2O = K(+)(in) + ADP + phosphate + H(+). In terms of biological role, part of the high-affinity ATP-driven potassium transport (or Kdp) system, which catalyzes the hydrolysis of ATP coupled with the electrogenic transport of potassium into the cytoplasm. This subunit is responsible for energy coupling to the transport system and for the release of the potassium ions to the cytoplasm. This is Potassium-transporting ATPase ATP-binding subunit from Clostridium botulinum (strain Eklund 17B / Type B).